We begin with the raw amino-acid sequence, 146 residues long: Hemoglobin subunit beta (146 aa).

A1 is subject to N-acetylalanine. The 145-residue stretch at 2-146 (SFDPHEKQLI…VAAALAAEYH (145 aa)) folds into the Globin domain. Positions 63 and 92 each coordinate heme b.

It belongs to the globin family. As to quaternary structure, heterotetramer of two alpha chains and two beta chains. In terms of tissue distribution, red blood cells.

Its function is as follows. Involved in oxygen transport from the lung to the various peripheral tissues. The protein is Hemoglobin subunit beta (HBB) of Crocodylus niloticus (Nile crocodile).